Consider the following 392-residue polypeptide: Carbamoyl phosphate synthase small chain (392 aa).

Residues 1-174 (MSKKALLALE…EVIVENPEGD (174 aa)) form a CPSase region. Residues Ser-47, Gly-224, and Gly-226 each coordinate L-glutamine. Positions 176 to 392 (SVVVLDSGVK…EFKRLIKEVR (217 aa)) constitute a Glutamine amidotransferase type-1 domain. Cys-252 serves as the catalytic Nucleophile. Residues Leu-253, Gln-256, Asn-294, Gly-296, and Phe-297 each contribute to the L-glutamine site. Active-site residues include His-367 and Glu-369.

It belongs to the CarA family. Composed of two chains; the small (or glutamine) chain promotes the hydrolysis of glutamine to ammonia, which is used by the large (or ammonia) chain to synthesize carbamoyl phosphate. Tetramer of heterodimers (alpha,beta)4.

It catalyses the reaction hydrogencarbonate + L-glutamine + 2 ATP + H2O = carbamoyl phosphate + L-glutamate + 2 ADP + phosphate + 2 H(+). The catalysed reaction is L-glutamine + H2O = L-glutamate + NH4(+). It functions in the pathway amino-acid biosynthesis; L-arginine biosynthesis; carbamoyl phosphate from bicarbonate: step 1/1. Its pathway is pyrimidine metabolism; UMP biosynthesis via de novo pathway; (S)-dihydroorotate from bicarbonate: step 1/3. Functionally, small subunit of the glutamine-dependent carbamoyl phosphate synthetase (CPSase). CPSase catalyzes the formation of carbamoyl phosphate from the ammonia moiety of glutamine, carbonate, and phosphate donated by ATP, constituting the first step of 2 biosynthetic pathways, one leading to arginine and/or urea and the other to pyrimidine nucleotides. The small subunit (glutamine amidotransferase) binds and cleaves glutamine to supply the large subunit with the substrate ammonia. This chain is Carbamoyl phosphate synthase small chain, found in Thermotoga maritima (strain ATCC 43589 / DSM 3109 / JCM 10099 / NBRC 100826 / MSB8).